The chain runs to 385 residues: Polyketide synthase 2 (385 aa).

Cys-157 is a catalytic residue.

This sequence belongs to the thiolase-like superfamily. Chalcone/stilbene synthases family. Expressed in leaves and glandular trichomes.

The protein localises to the cytoplasm. Its function is as follows. Polyketide synthase responsible for the biosynthesis of secondary metabolites. In Cannabis sativa (Hemp), this protein is Polyketide synthase 2 (PKSG2).